The sequence spans 441 residues: ATP-dependent protease ATPase subunit HslU (441 aa).

ATP is bound by residues Ile18 and 60 to 65 (GVGKTE). Positions 131–158 (ILDALLPRPRGSEYDHARDESSTRQTFR) are disordered. Basic and acidic residues predominate over residues 140–152 (RGSEYDHARDESS). Residues Asp254, Glu320, and Arg392 each coordinate ATP.

The protein belongs to the ClpX chaperone family. HslU subfamily. A double ring-shaped homohexamer of HslV is capped on each side by a ring-shaped HslU homohexamer. The assembly of the HslU/HslV complex is dependent on binding of ATP.

It is found in the cytoplasm. Its function is as follows. ATPase subunit of a proteasome-like degradation complex; this subunit has chaperone activity. The binding of ATP and its subsequent hydrolysis by HslU are essential for unfolding of protein substrates subsequently hydrolyzed by HslV. HslU recognizes the N-terminal part of its protein substrates and unfolds these before they are guided to HslV for hydrolysis. This is ATP-dependent protease ATPase subunit HslU from Chromohalobacter salexigens (strain ATCC BAA-138 / DSM 3043 / CIP 106854 / NCIMB 13768 / 1H11).